Reading from the N-terminus, the 166-residue chain is Phospholipase A2 inhibitor clone 06/08 (166 aa).

Residues 1–19 (MRLILLSGLLLLGIFLANG) form the signal peptide. The C-type lectin domain occupies 46 to 161 (LRGAFLTVYK…CDDNLLVVCE (116 aa)). 2 N-linked (GlcNAc...) asparagine glycosylation sites follow: asparagine 61 and asparagine 122. Cystine bridges form between cysteine 83-cysteine 160 and cysteine 138-cysteine 152.

The protein belongs to the alpha-type phospholipase A2 inhibitor family. As to quaternary structure, homotrimer; non-covalently linked. In terms of tissue distribution, expressed by the liver.

The protein resides in the secreted. Its function is as follows. This phospholipase A2 inhibitor binds directly phospholipase A2 in the presence or absence of calcium. The chain is Phospholipase A2 inhibitor clone 06/08 from Bothrops neuwiedi (Neuwied's lancehead).